A 190-amino-acid chain; its full sequence is Venom nerve growth factor (190 aa).

Positions 1 to 7 are cleaved as a signal peptide; sequence FLIGIWA. The propeptide occupies 8 to 111; the sequence is APKSEDNVPL…SLNRNIRAKR (104 aa). A disulfide bridge connects residues Cys-125 and Cys-190. The N-linked (GlcNAc...) asparagine glycan is linked to Asn-134.

It belongs to the NGF-beta family. Homodimer; non-covalently linked. In terms of processing, glycosylated. Expressed by the venom gland.

The protein resides in the secreted. In terms of biological role, nerve growth factor is important for the development and maintenance of the sympathetic and sensory nervous systems. It stimulates division and differentiation of sympathetic and embryonic sensory neurons as well as basal forebrain cholinergic neurons in the brain. Its relevance in the snake venom is not clear. However, it has been shown to inhibit metalloproteinase-dependent proteolysis of platelet glycoprotein Ib alpha, suggesting a metalloproteinase inhibition to prevent metalloprotease autodigestion and/or protection against prey proteases. Binds a lipid between the two protein chains in the homodimer. The lipid-bound form promotes histamine relase from mouse mast cells, contrary to the lipid-free form. In Agkistrodon contortrix contortrix (Southern copperhead), this protein is Venom nerve growth factor.